A 453-amino-acid chain; its full sequence is tRNA modification GTPase MnmE (453 aa).

(6S)-5-formyl-5,6,7,8-tetrahydrofolate contacts are provided by R22, E79, and K119. Residues G215–G376 form the TrmE-type G domain. Position 225 (N225) interacts with K(+). Residues N225 to S230, T244 to T250, D269 to G272, and N334 to D337 contribute to the GTP site. S229 is a Mg(2+) binding site. Residues T244, I246, and T249 each coordinate K(+). Mg(2+) is bound at residue T250. (6S)-5-formyl-5,6,7,8-tetrahydrofolate is bound at residue K453.

Belongs to the TRAFAC class TrmE-Era-EngA-EngB-Septin-like GTPase superfamily. TrmE GTPase family. In terms of assembly, homodimer. Heterotetramer of two MnmE and two MnmG subunits. K(+) serves as cofactor.

The protein resides in the cytoplasm. Functionally, exhibits a very high intrinsic GTPase hydrolysis rate. Involved in the addition of a carboxymethylaminomethyl (cmnm) group at the wobble position (U34) of certain tRNAs, forming tRNA-cmnm(5)s(2)U34. This is tRNA modification GTPase MnmE from Vibrio cholerae serotype O1 (strain ATCC 39541 / Classical Ogawa 395 / O395).